The following is a 639-amino-acid chain: Ubiquitin-like modifier-activating enzyme ATG7 (639 aa).

The GXGXXG motif signature appears at 322 to 327; that stretch reads GAGTLG. Cys-502 serves as the catalytic Glycyl thioester intermediate.

The protein belongs to the ATG7 family. In terms of assembly, homodimer.

It is found in the cytoplasm. The protein resides in the preautophagosomal structure. Its function is as follows. E1-like activating enzyme involved in the 2 ubiquitin-like systems required for cytoplasm to vacuole transport (Cvt) and autophagy. Activates ATG12 for its conjugation with ATG5 and ATG8 for its conjugation with phosphatidylethanolamine. Both systems are needed for the ATG8 association to Cvt vesicles and autophagosomes membranes. Autophagy is essential for maintenance of amino acid levels and protein synthesis under nitrogen starvation. Required for selective autophagic degradation of the nucleus (nucleophagy) as well as for mitophagy which contributes to regulate mitochondrial quantity and quality by eliminating the mitochondria to a basal level to fulfill cellular energy requirements and preventing excess ROS production. Plays a role in the regulation of filamentous growth and chronological longevity. This is Ubiquitin-like modifier-activating enzyme ATG7 (APG7) from Candida albicans (strain SC5314 / ATCC MYA-2876) (Yeast).